Consider the following 86-residue polypeptide: Large ribosomal subunit protein bL27 (86 aa).

The disordered stretch occupies residues 1–26; it reads MATKKAGGSSRNGRDSAGRRLGVKKS.

This sequence belongs to the bacterial ribosomal protein bL27 family.

This is Large ribosomal subunit protein bL27 from Rickettsia akari (strain Hartford).